The chain runs to 89 residues: Small ribosomal subunit protein uS14 (89 aa).

Belongs to the universal ribosomal protein uS14 family. As to quaternary structure, part of the 30S ribosomal subunit. Contacts proteins S3 and S10.

Functionally, binds 16S rRNA, required for the assembly of 30S particles and may also be responsible for determining the conformation of the 16S rRNA at the A site. The protein is Small ribosomal subunit protein uS14 of Chloroherpeton thalassium (strain ATCC 35110 / GB-78).